The sequence spans 591 residues: Myelin expression factor 2 (591 aa).

The tract at residues 1 to 92 (MADADKSEAA…GEKKGPNRNR (92 aa)) is disordered. Positions 22–36 (EPRRDTHPGEPEKPP) are enriched in basic and acidic residues. K44 participates in a covalent cross-link: Glycyl lysine isopeptide (Lys-Gly) (interchain with G-Cter in SUMO2). Composition is skewed to basic and acidic residues over residues 45-63 (MEND…EKST) and 74-87 (YSKD…EKKG). RRM domains follow at residues 91–169 (NRVF…EDPD) and 224–301 (STIF…MDDK). Omega-N-methylarginine occurs at positions 397 and 417. S422 is subject to Phosphoserine. In terms of domain architecture, RRM 3 spans 514 to 590 (NQIFVRNLPF…REIDVRLDRN (77 aa)).

As to quaternary structure, monomer. In terms of tissue distribution, highly expressed in the brain.

The protein localises to the nucleus. In terms of biological role, transcriptional repressor of the myelin basic protein gene (MBP). Binds to the proximal MB1 element 5'-TTGTCC-3' of the MBP promoter. Its binding to MB1 and function are inhibited by PURA. This is Myelin expression factor 2 (Myef2) from Mus musculus (Mouse).